Here is a 1550-residue protein sequence, read N- to C-terminus: MSIERVPILGKETIHVGYGIADHIVNEVIANLASSTYVIVTDTNMARTPQYSKLTDDFKTNLSKKRPESRLLTYCVSPGENNKNRVTKAAVEDFLLQQGCTRDTVILAVGGGVIGDMIGFVAATFMRGVRVVQVPTTLLAMVDSSVGGKTAIDTPLGKNFIGAFHQPEYVFCDVSFLETLPARQFINGMAEVVKTAAIWNEEEFTRLENFSKKFLSVVTSKKPDLQSIKAELVKTVLESVRVKAGVVSSDEKEAGLRNLLNFGHTIGHAIEAVLTPEALHGECVSIGMIKEAELSRYLGILPPVAVARLSKCLVAYGLPVSIDDKEFLKKVGPKRHYVEIDILLKKMAIDKKNDGSKIRCVLLEKIGKCYQLKAHQVSKQDLSFVLTDEVLVHPFTNPPKENIIVPPGSKSISNRALILAALGNGTVRVKNLLHSDDTKHMLDAVASLKGAEISTEDNGETIVVKGNGGNLVTCGEELYLGNAGTASRFLTTVASLVGKSPASDDVILTGNARMQERPIGPLVDALRSNGSEIEYLNKQGSLPLKISAGNGLKGGRIELAATISSQYVSSILMCAPYAKEPVTLALVGGKPISQLYIDMTCAMMKSFGIEVTKSTTEEYTYHIPKGIYKNPTEYVIESDASSATYPLAFAAMTGTSCTIPNIGSSSLQGDARFAVDVLKPMGCKVEQTATSTTVTGPPRGHLKPLPHVDMEPMTDAFLTASVVAAVAKGGSTSITGIANQRVKECNRIEAMVTELAKFGVSANELPDGIEIHGIDIKDLKTPEISDRGVCSYDDHRVAMSFSLLAGLCKEPVLILERSTTGKTWPGWWDILHSKFKIELDGYEPPFNTDKHVIKSSDKGVIVIGMRGTGKSTLSEWLASFLGFKMLDMDKYLEEKLGTDIKSLIKAKGWEHFRKEEAIVAKECFTKFSKGYVLSTGGGIVEGEDARQQLKSYADNGGIVLHLHRDLDETVTFLAADTTRPAYSSEVQEVWLRREKWYHECSNYHFYSSHCSTEDEFNHLRKSFVNYIKLITGAERSVVPTGRSTAVVLTLPDLNNVAGDLESITIGADAVELRVDLLKDTSAAFVAAQIATTRKHADLPIIYTVRTVSQGGKFPDENVDELKSLLLLGIRLGVAYIDLQLTAPNELIEEISSKKGFTRIIGTYQDINGELKWNNVEWKNKYNQGVSMNADIVRLVGRANSIQDNLDLEDFKKQNTLKPLIAFNLGTQGKLSQVLNGTFTPISHQLLPNDDGLLTIGEINQTYFDIGGFTAKKFWVIGSPIEHSRSPNLHNAGYKALNLPYQFGRFEATDVDVVYDNLINKSDFGGLAITMPLKLDIMKFATKLSDAAETIGAVNTLIPVEGGYFGDNTDWVGISNSFIRAGVPPKSSSNGLVVGAGGTSRAAIYALHQMGCTKIYLVNRTVAKLEELVKSFPKDYNLEIVETEQQADKVNKVLLAVSCIPADKPLDSDVLKKIERILSNGSEQVAGFKPTLLEASYKPRVTPIMKLAEEQYKWKVIPGVEMLVNQGDRQFKLHTGFSAPYEIIHRAVVEE.

Residues 1–379 (MSIERVPILG…YQLKAHQVSK (379 aa)) form a 3-dehydroquinate synthase region. Residues 42-44 (DTN), 80-83 (ENNK), 111-113 (GGV), and Asp-116 contribute to the NAD(+) site. Arg-127 is a 7-phospho-2-dehydro-3-deoxy-D-arabino-heptonate binding site. Residue 136–137 (TT) coordinates NAD(+). 7-phospho-2-dehydro-3-deoxy-D-arabino-heptonate is bound by residues Asp-143 and Lys-149. Lys-158 contributes to the NAD(+) binding site. Asn-159 is a binding site for 7-phospho-2-dehydro-3-deoxy-D-arabino-heptonate. NAD(+)-binding positions include 176–179 (FLET) and Asn-187. Glu-191 is a Zn(2+) binding site. 7-phospho-2-dehydro-3-deoxy-D-arabino-heptonate contacts are provided by residues 191-194 (EVVK) and Lys-243. Residue Glu-253 is the Proton acceptor; for 3-dehydroquinate synthase activity of the active site. 7-phospho-2-dehydro-3-deoxy-D-arabino-heptonate is bound by residues 257 to 261 (RNLLN) and His-264. Residue His-264 participates in Zn(2+) binding. His-268 (proton acceptor; for 3-dehydroquinate synthase activity) is an active-site residue. Residues His-280 and Lys-351 each contribute to the 7-phospho-2-dehydro-3-deoxy-D-arabino-heptonate site. His-280 contacts Zn(2+). The segment at 392 to 837 (VHPFTNPPKE…WDILHSKFKI (446 aa)) is EPSP synthase. The segment at 857-1047 (DKGVIVIGMR…VPTGRSTAVV (191 aa)) is shikimate kinase. 864–871 (GMRGTGKS) provides a ligand contact to ATP. Positions 1048-1257 (LTLPDLNNVA…NDDGLLTIGE (210 aa)) are 3-dehydroquinase. The active-site Schiff-base intermediate with substrate; for 3-dehydroquinate dehydratase activity is Arg-1193. Residues 1270–1550 (AKKFWVIGSP…EIIHRAVVEE (281 aa)) are shikimate dehydrogenase.

In the N-terminal section; belongs to the sugar phosphate cyclases superfamily. Dehydroquinate synthase family. The protein in the 2nd section; belongs to the EPSP synthase family. It in the 3rd section; belongs to the shikimate kinase family. This sequence in the 4th section; belongs to the type-I 3-dehydroquinase family. In the C-terminal section; belongs to the shikimate dehydrogenase family. Homodimer. The cofactor is Zn(2+).

Its subcellular location is the cytoplasm. It carries out the reaction 7-phospho-2-dehydro-3-deoxy-D-arabino-heptonate = 3-dehydroquinate + phosphate. The enzyme catalyses 3-dehydroquinate = 3-dehydroshikimate + H2O. It catalyses the reaction shikimate + NADP(+) = 3-dehydroshikimate + NADPH + H(+). The catalysed reaction is shikimate + ATP = 3-phosphoshikimate + ADP + H(+). It carries out the reaction 3-phosphoshikimate + phosphoenolpyruvate = 5-O-(1-carboxyvinyl)-3-phosphoshikimate + phosphate. The protein operates within metabolic intermediate biosynthesis; chorismate biosynthesis; chorismate from D-erythrose 4-phosphate and phosphoenolpyruvate: step 2/7. It participates in metabolic intermediate biosynthesis; chorismate biosynthesis; chorismate from D-erythrose 4-phosphate and phosphoenolpyruvate: step 3/7. It functions in the pathway metabolic intermediate biosynthesis; chorismate biosynthesis; chorismate from D-erythrose 4-phosphate and phosphoenolpyruvate: step 4/7. Its pathway is metabolic intermediate biosynthesis; chorismate biosynthesis; chorismate from D-erythrose 4-phosphate and phosphoenolpyruvate: step 5/7. The protein operates within metabolic intermediate biosynthesis; chorismate biosynthesis; chorismate from D-erythrose 4-phosphate and phosphoenolpyruvate: step 6/7. Its function is as follows. The AROM polypeptide catalyzes 5 consecutive enzymatic reactions in prechorismate polyaromatic amino acid biosynthesis. This Candida dubliniensis (strain CD36 / ATCC MYA-646 / CBS 7987 / NCPF 3949 / NRRL Y-17841) (Yeast) protein is Pentafunctional AROM polypeptide.